A 333-amino-acid polypeptide reads, in one-letter code: Fatty acid hydroxylase domain-containing protein 2 (333 aa).

6 consecutive transmembrane segments (helical) span residues 29–49 (FILGSGLLSFVAFWNSVTWHL), 77–97 (ILFFIGAIQVPCLFFWSFNGL), 134–154 (TVLFNQCMISFPMVVFLYPFL), 168–188 (FHWFLLELAIFTLIEEVLFYY), 215–235 (VISLYAHPIEHAVSNMLPVIV), and 237–257 (PLVMGSHLSSITMWFSLALII). The Fatty acid hydroxylase domain maps to 176 to 299 (AIFTLIEEVL…LGVLDHLHGT (124 aa)).

The protein belongs to the sterol desaturase family. As to expression, down-regulated in primary acute myeloid leukemia (AML) patients.

The protein resides in the cytoplasm. It is found in the membrane. Promotes megakaryocyte differentiation by enhancing ERK phosphorylation and up-regulating RUNX1 expression. This chain is Fatty acid hydroxylase domain-containing protein 2 (FAXDC2), found in Homo sapiens (Human).